The sequence spans 460 residues: Argininosuccinate lyase (460 aa).

It belongs to the lyase 1 family. Argininosuccinate lyase subfamily.

Its subcellular location is the cytoplasm. It carries out the reaction 2-(N(omega)-L-arginino)succinate = fumarate + L-arginine. It functions in the pathway amino-acid biosynthesis; L-arginine biosynthesis; L-arginine from L-ornithine and carbamoyl phosphate: step 3/3. The chain is Argininosuccinate lyase from Sulfurimonas denitrificans (strain ATCC 33889 / DSM 1251) (Thiomicrospira denitrificans (strain ATCC 33889 / DSM 1251)).